We begin with the raw amino-acid sequence, 201 residues long: MELAIKDASGGLEVSEATFGREFNEALVHQVVVAYAAGARQGTRAQKTRSEVSGGGKKPWAQKGTGRARAGTIRSPIWRSGGVSFAAKPQDHSQKVNRKMYRGAIKSILSELVRQERLIVVESFALAAPKTKELVAKLKELELKDVLIVTEEVDENLFLSARNLYKVDTRDVAGIDPVSLIAFDKVLITAAAVKQLEEALA.

The interval 43-71 (TRAQKTRSEVSGGGKKPWAQKGTGRARAG) is disordered.

This sequence belongs to the universal ribosomal protein uL4 family. As to quaternary structure, part of the 50S ribosomal subunit.

Its function is as follows. One of the primary rRNA binding proteins, this protein initially binds near the 5'-end of the 23S rRNA. It is important during the early stages of 50S assembly. It makes multiple contacts with different domains of the 23S rRNA in the assembled 50S subunit and ribosome. Forms part of the polypeptide exit tunnel. This chain is Large ribosomal subunit protein uL4, found in Pseudoalteromonas translucida (strain TAC 125).